A 95-amino-acid polypeptide reads, in one-letter code: CRISPR-associated endoribonuclease Cas2 3 (95 aa).

Position 7 (aspartate 7) interacts with Mg(2+).

This sequence belongs to the CRISPR-associated endoribonuclease Cas2 protein family. Homodimer, forms a heterotetramer with a Cas1 homodimer. Mg(2+) is required as a cofactor.

In terms of biological role, CRISPR (clustered regularly interspaced short palindromic repeat), is an adaptive immune system that provides protection against mobile genetic elements (viruses, transposable elements and conjugative plasmids). CRISPR clusters contain sequences complementary to antecedent mobile elements and target invading nucleic acids. CRISPR clusters are transcribed and processed into CRISPR RNA (crRNA). Functions as a ssRNA-specific endoribonuclease. Involved in the integration of spacer DNA into the CRISPR cassette. The chain is CRISPR-associated endoribonuclease Cas2 3 from Rhodospirillum rubrum (strain ATCC 11170 / ATH 1.1.1 / DSM 467 / LMG 4362 / NCIMB 8255 / S1).